The sequence spans 541 residues: Putative transferase YhbX (541 aa).

The Periplasmic portion of the chain corresponds to 1 to 60 (MTVFNKFARTFKSHWLLYLCVIVFGITNLVASSGAHMVQRLLFFVLTILVVKRISSLPLR). Residues 61 to 81 (LLVAAPFVLLTAADMSISLYS) form a helical membrane-spanning segment. The Cytoplasmic segment spans residues 82-110 (WCTFGTTFNDGFAISVLQSDPDEVVKMLG). Residues 111 to 131 (MYIPYLCAFAFLSLLFLAVII) traverse the membrane as a helical segment. At 132–141 (KYDVSLPTKK) the chain is on the periplasmic side. The chain crosses the membrane as a helical span at residues 142–162 (VTGILLLIVISGSLFSACQFA). Residues 163-264 (YKDAKNKKAF…RKQIKLFNQA (102 aa)) lie on the Cytoplasmic side of the membrane. The chain crosses the membrane as a helical span at residues 265-285 (ISGAPYTALSVPLSLTADSVL). Residues 286-541 (SHDIHNYPDN…QGNPTPEGQG (256 aa)) lie on the Periplasmic side of the membrane.

This sequence belongs to the phosphoethanolamine transferase family.

It localises to the cell inner membrane. Probably does not transfer phosphoethanolamine to lipid A. The protein is Putative transferase YhbX (yhbX) of Escherichia coli (strain K12).